A 366-amino-acid polypeptide reads, in one-letter code: Chorismate synthase (366 aa).

NADP(+) contacts are provided by arginine 48 and arginine 54. FMN is bound by residues 125–127 (RSS), 238–239 (NA), glycine 278, 293–297 (KPTSS), and arginine 319.

This sequence belongs to the chorismate synthase family. Homotetramer. FMNH2 serves as cofactor.

It catalyses the reaction 5-O-(1-carboxyvinyl)-3-phosphoshikimate = chorismate + phosphate. Its pathway is metabolic intermediate biosynthesis; chorismate biosynthesis; chorismate from D-erythrose 4-phosphate and phosphoenolpyruvate: step 7/7. Catalyzes the anti-1,4-elimination of the C-3 phosphate and the C-6 proR hydrogen from 5-enolpyruvylshikimate-3-phosphate (EPSP) to yield chorismate, which is the branch point compound that serves as the starting substrate for the three terminal pathways of aromatic amino acid biosynthesis. This reaction introduces a second double bond into the aromatic ring system. The protein is Chorismate synthase of Chromobacterium violaceum (strain ATCC 12472 / DSM 30191 / JCM 1249 / CCUG 213 / NBRC 12614 / NCIMB 9131 / NCTC 9757 / MK).